The following is a 306-amino-acid chain: Probable protein ABIL1 (306 aa).

Residues 200-236 (KNSKTNGARQSEFVLEETKATKPASRGKEPSTSPLPK) form a disordered region.

It belongs to the ABI family. Binds SCAR.

It localises to the cytoplasm. The protein resides in the cytoskeleton. Its function is as follows. Involved in regulation of actin and microtubule organization. Part of a WAVE complex that activates the Arp2/3 complex. The polypeptide is Probable protein ABIL1 (Oryza sativa subsp. japonica (Rice)).